A 210-amino-acid polypeptide reads, in one-letter code: Ribosomal RNA large subunit methyltransferase E (210 aa).

G61, W63, D81, D97, and D122 together coordinate S-adenosyl-L-methionine. K162 (proton acceptor) is an active-site residue.

Belongs to the class I-like SAM-binding methyltransferase superfamily. RNA methyltransferase RlmE family.

Its subcellular location is the cytoplasm. It carries out the reaction uridine(2552) in 23S rRNA + S-adenosyl-L-methionine = 2'-O-methyluridine(2552) in 23S rRNA + S-adenosyl-L-homocysteine + H(+). Specifically methylates the uridine in position 2552 of 23S rRNA at the 2'-O position of the ribose in the fully assembled 50S ribosomal subunit. The chain is Ribosomal RNA large subunit methyltransferase E from Xanthomonas campestris pv. campestris (strain 8004).